The primary structure comprises 251 residues: Small ribosomal subunit protein uS3 (251 aa).

The 74-residue stretch at 39–112 folds into the KH type-2 domain; sequence IRKYINEVYA…NIILNVVEVR (74 aa). Residues 222–251 are disordered; the sequence is EEKKPAKKFNKKPVAAKPANKEEKSSKEVK. Residues 240–251 show a composition bias toward basic and acidic residues; it reads ANKEEKSSKEVK.

It belongs to the universal ribosomal protein uS3 family. As to quaternary structure, part of the 30S ribosomal subunit. Forms a tight complex with proteins S10 and S14.

In terms of biological role, binds the lower part of the 30S subunit head. Binds mRNA in the 70S ribosome, positioning it for translation. The chain is Small ribosomal subunit protein uS3 from Anaeroplasma abactoclasticum.